We begin with the raw amino-acid sequence, 734 residues long: Polyribonucleotide nucleotidyltransferase (734 aa).

Aspartate 503 and aspartate 509 together coordinate Mg(2+). The KH domain occupies 570 to 629 (PKLSTIQVPVDAIGMIIGKGGETIRSITEETGAQINVDDDGTVTISSPNGESAAAAIETI). The region spanning 639 to 713 (GTIYMGKVKD…GKIRYALSIK (75 aa)) is the S1 motif domain.

The protein belongs to the polyribonucleotide nucleotidyltransferase family. It depends on Mg(2+) as a cofactor.

It is found in the cytoplasm. The enzyme catalyses RNA(n+1) + phosphate = RNA(n) + a ribonucleoside 5'-diphosphate. Involved in mRNA degradation. Catalyzes the phosphorolysis of single-stranded polyribonucleotides processively in the 3'- to 5'-direction. In Chlorobium phaeobacteroides (strain BS1), this protein is Polyribonucleotide nucleotidyltransferase.